We begin with the raw amino-acid sequence, 372 residues long: Glutamate 5-kinase (372 aa).

ATP is bound at residue Lys14. Substrate is bound by residues Ser54, Asp141, and Asn153. 173-174 (TD) serves as a coordination point for ATP. In terms of domain architecture, PUA spans 280–358 (RGTLVLDAGA…DAIESLLGYS (79 aa)).

The protein belongs to the glutamate 5-kinase family.

The protein localises to the cytoplasm. It carries out the reaction L-glutamate + ATP = L-glutamyl 5-phosphate + ADP. The protein operates within amino-acid biosynthesis; L-proline biosynthesis; L-glutamate 5-semialdehyde from L-glutamate: step 1/2. Functionally, catalyzes the transfer of a phosphate group to glutamate to form L-glutamate 5-phosphate. The protein is Glutamate 5-kinase of Pseudomonas putida (strain W619).